The following is a 451-amino-acid chain: UDP-glucosyltransferase 74AE2 (451 aa).

The active-site Proton acceptor is H17. H17 lines the an anthocyanidin pocket. Catalysis depends on D108, which acts as the Charge relay. T130, Q330, H345, W348, N349, S350, E353, D369, and Q370 together coordinate UDP-alpha-D-glucose.

It belongs to the UDP-glycosyltransferase family. In terms of tissue distribution, expressed at higher levels in roots than in leaves.

It catalyses the reaction (20S)-ginsenoside C-K + UDP-alpha-D-glucose = (20S)-ginsenoside F2 + UDP + H(+). It carries out the reaction (20S)-protopanaxadiol + UDP-alpha-D-glucose = (20S)-ginsenoside Rh2 + UDP + H(+). The protein operates within secondary metabolite biosynthesis; terpenoid biosynthesis. Its function is as follows. Component of the dammarane-type triterpene saponins (e.g. PPD-type ginsenosides or panaxosides) biosynthetic pathway. Glycosyltransferase that catalyzes the biosynthesis of ginsenoside Rh2 from protopanaxadiol (PPD) and the conversion of compound K to ginsenoside F2. The sequence is that of UDP-glucosyltransferase 74AE2 from Panax ginseng (Korean ginseng).